We begin with the raw amino-acid sequence, 69 residues long: Conotoxin LvVID (69 aa).

Positions 1 to 17 (VLIIAVLFLTACQLTTA) are cleaved as a signal peptide. The propeptide occupies 18–40 (ETYPRGQQRHHALRSTDKNSKLT). 3 cysteine pairs are disulfide-bonded: Cys-43–Cys-57, Cys-50–Cys-61, and Cys-56–Cys-68.

The protein belongs to the conotoxin O1 superfamily. Expressed by the venom duct.

It is found in the secreted. This chain is Conotoxin LvVID, found in Conus lividus (Livid cone).